The sequence spans 141 residues: MAKKVEKLVKLQIPAGKATPAPPVGPALGQAGINIMGFTKEFNARTADQAGMIIPVVISVYEDKSFTFVTKTPPAAVLLKKAAGVEKGSGTPNKTKVATVTRAQVQEIAETKMPDLNAANVESAMRMIEGTARSMGFTVVD.

The protein belongs to the universal ribosomal protein uL11 family. In terms of assembly, part of the ribosomal stalk of the 50S ribosomal subunit. Interacts with L10 and the large rRNA to form the base of the stalk. L10 forms an elongated spine to which L12 dimers bind in a sequential fashion forming a multimeric L10(L12)X complex. One or more lysine residues are methylated.

In terms of biological role, forms part of the ribosomal stalk which helps the ribosome interact with GTP-bound translation factors. The protein is Large ribosomal subunit protein uL11 of Streptococcus pneumoniae serotype 2 (strain D39 / NCTC 7466).